A 568-amino-acid polypeptide reads, in one-letter code: Adenine deaminase (568 aa).

This sequence belongs to the metallo-dependent hydrolases superfamily. Adenine deaminase family. It depends on Mn(2+) as a cofactor.

It carries out the reaction adenine + H2O + H(+) = hypoxanthine + NH4(+). The chain is Adenine deaminase from Clostridium perfringens (strain ATCC 13124 / DSM 756 / JCM 1290 / NCIMB 6125 / NCTC 8237 / Type A).